Here is a 79-residue protein sequence, read N- to C-terminus: Large ribosomal subunit protein uL29 (79 aa).

It belongs to the universal ribosomal protein uL29 family.

In Tropheryma whipplei (strain Twist) (Whipple's bacillus), this protein is Large ribosomal subunit protein uL29.